Consider the following 715-residue polypeptide: Polyribonucleotide nucleotidyltransferase (715 aa).

Mg(2+)-binding residues include Asp488 and Asp494. Residues 555–614 form the KH domain; it reads PRIEVMHIPTDKIRDVIGSGGKVIREIVEKTGAKINIEDDGTVKIASSNAKEIEAAKKWI. Positions 624–692 constitute an S1 motif domain; that stretch reads GEIYEGTVVK…ERGKVRLSMK (69 aa).

This sequence belongs to the polyribonucleotide nucleotidyltransferase family. Mg(2+) is required as a cofactor.

Its subcellular location is the cytoplasm. It catalyses the reaction RNA(n+1) + phosphate = RNA(n) + a ribonucleoside 5'-diphosphate. Functionally, involved in mRNA degradation. Catalyzes the phosphorolysis of single-stranded polyribonucleotides processively in the 3'- to 5'-direction. In Mesorhizobium japonicum (strain LMG 29417 / CECT 9101 / MAFF 303099) (Mesorhizobium loti (strain MAFF 303099)), this protein is Polyribonucleotide nucleotidyltransferase.